Reading from the N-terminus, the 250-residue chain is Endonuclease NucS (250 aa).

The protein belongs to the NucS endonuclease family.

The protein localises to the cytoplasm. Cleaves both 3' and 5' ssDNA extremities of branched DNA structures. The chain is Endonuclease NucS from Sulfolobus acidocaldarius (strain ATCC 33909 / DSM 639 / JCM 8929 / NBRC 15157 / NCIMB 11770).